We begin with the raw amino-acid sequence, 426 residues long: Gamma-glutamyl phosphate reductase (426 aa).

Belongs to the gamma-glutamyl phosphate reductase family.

Its subcellular location is the cytoplasm. The catalysed reaction is L-glutamate 5-semialdehyde + phosphate + NADP(+) = L-glutamyl 5-phosphate + NADPH + H(+). It participates in amino-acid biosynthesis; L-proline biosynthesis; L-glutamate 5-semialdehyde from L-glutamate: step 2/2. In terms of biological role, catalyzes the NADPH-dependent reduction of L-glutamate 5-phosphate into L-glutamate 5-semialdehyde and phosphate. The product spontaneously undergoes cyclization to form 1-pyrroline-5-carboxylate. The sequence is that of Gamma-glutamyl phosphate reductase from Acidovorax ebreus (strain TPSY) (Diaphorobacter sp. (strain TPSY)).